The following is a 447-amino-acid chain: Tubulin beta-2 chain (447 aa).

The GTP site is built by Q9, E67, S136, G140, T141, G142, N202, and N224. A Mg(2+)-binding site is contributed by E67. A compositionally biased stretch (polar residues) spans 411–425 (SNMNDLVSEYQQYQD). A disordered region spans residues 411–447 (SNMNDLVSEYQQYQDATAEEDEYEEEEEDYHQEHDEM). The segment covering 427–440 (TAEEDEYEEEEEDY) has biased composition (acidic residues).

The protein belongs to the tubulin family. Dimer of alpha and beta chains. A typical microtubule is a hollow water-filled tube with an outer diameter of 25 nm and an inner diameter of 15 nM. Alpha-beta heterodimers associate head-to-tail to form protofilaments running lengthwise along the microtubule wall with the beta-tubulin subunit facing the microtubule plus end conferring a structural polarity. Microtubules usually have 13 protofilaments but different protofilament numbers can be found in some organisms and specialized cells. Mg(2+) serves as cofactor.

It is found in the cytoplasm. The protein localises to the cytoskeleton. Tubulin is the major constituent of microtubules, a cylinder consisting of laterally associated linear protofilaments composed of alpha- and beta-tubulin heterodimers. Microtubules grow by the addition of GTP-tubulin dimers to the microtubule end, where a stabilizing cap forms. Below the cap, tubulin dimers are in GDP-bound state, owing to GTPase activity of alpha-tubulin. This chain is Tubulin beta-2 chain (TUBB2), found in Pisum sativum (Garden pea).